Reading from the N-terminus, the 269-residue chain is Ribonuclease HII (269 aa).

An RNase H type-2 domain is found at 83 to 269 (YLIAGVDEVG…HRMSFLTNIL (187 aa)). Residues D89, E90, and D185 each contribute to the a divalent metal cation site.

It belongs to the RNase HII family. It depends on Mn(2+) as a cofactor. Requires Mg(2+) as cofactor.

Its subcellular location is the cytoplasm. The enzyme catalyses Endonucleolytic cleavage to 5'-phosphomonoester.. Functionally, endonuclease that specifically degrades the RNA of RNA-DNA hybrids. The polypeptide is Ribonuclease HII (Clostridium botulinum (strain Langeland / NCTC 10281 / Type F)).